A 425-amino-acid chain; its full sequence is Phosphoribosylamine--glycine ligase (425 aa).

An ATP-grasp domain is found at 109 to 315 (KALMQEAGIP…LEELILACVQ (207 aa)). 135-195 (IQAQGAPIVV…EECLTGQEVS (61 aa)) contributes to the ATP binding site. E285 and N287 together coordinate Mg(2+).

This sequence belongs to the GARS family. The cofactor is Mg(2+). It depends on Mn(2+) as a cofactor.

It carries out the reaction 5-phospho-beta-D-ribosylamine + glycine + ATP = N(1)-(5-phospho-beta-D-ribosyl)glycinamide + ADP + phosphate + H(+). Its pathway is purine metabolism; IMP biosynthesis via de novo pathway; N(1)-(5-phospho-D-ribosyl)glycinamide from 5-phospho-alpha-D-ribose 1-diphosphate: step 2/2. This chain is Phosphoribosylamine--glycine ligase, found in Nostoc sp. (strain PCC 7120 / SAG 25.82 / UTEX 2576).